The following is a 383-amino-acid chain: 3-phytase (383 aa).

An N-terminal signal peptide occupies residues 1 to 26 (MNHSKTLLLTAAAGLMLTCGAVSSQA). Positions 27 to 29 (KHK) are excised as a propeptide. Positions 30 to 362 (LSDPYHFTVN…VPWERIADQI (333 aa)) constitute a BPP domain.

Requires Ca(2+) as cofactor.

The protein resides in the secreted. It carries out the reaction 1D-myo-inositol hexakisphosphate + H2O = 1D-myo-inositol 1,2,4,5,6-pentakisphosphate + phosphate. Its function is as follows. Catalyzes the hydrolysis of inorganic orthophosphate from phytate. Only phytate, ADP, and ATP were hydrolyzed (100, 75, and 50% of the relative activity, respectively). This is 3-phytase (phyC) from Bacillus subtilis.